The primary structure comprises 406 residues: Haptoglobin (406 aa).

Positions 1–18 (MSALGAVIALLLWGQLFA) are cleaved as a signal peptide. 2 Sushi domains span residues 31–88 (DGCP…ECEA) and 90–147 (DGCP…ECEA). 5 disulfide bridges follow: Cys52-Cys86, Cys111-Cys145, Cys149-Cys266, Cys309-Cys340, and Cys351-Cys381. A Peptidase S1 domain is found at 162 to 404 (ILGGHLDAKG…IQDWVQKTIA (243 aa)). Residue Asn184 is glycosylated (N-linked (GlcNAc...) (complex) asparagine). Residues Asn207 and Asn211 are each glycosylated (N-linked (GlcNAc...) asparagine). An N-linked (GlcNAc...) (complex) asparagine glycan is attached at Asn241. An interaction with CD163 region spans residues 318–323 (VPEKKT).

It belongs to the peptidase S1 family. As to quaternary structure, tetramer of two alpha and two beta chains; disulfide-linked. The hemoglobin/haptoglobin complex is composed of a haptoglobin dimer bound to two hemoglobin alpha-beta dimers. Interacts with CD163. Interacts with ERGIC3. Expressed by the liver and secreted in plasma.

Its subcellular location is the secreted. Functionally, as a result of hemolysis, hemoglobin is found to accumulate in the kidney and is secreted in the urine. Haptoglobin captures, and combines with free plasma hemoglobin to allow hepatic recycling of heme iron and to prevent kidney damage. Haptoglobin also acts as an antioxidant, has antibacterial activity, and plays a role in modulating many aspects of the acute phase response. Hemoglobin/haptoglobin complexes are rapidly cleared by the macrophage CD163 scavenger receptor expressed on the surface of liver Kupfer cells through an endocytic lysosomal degradation pathway. In terms of biological role, the uncleaved form of allele alpha-2 (2-2), known as zonulin, plays a role in intestinal permeability, allowing intercellular tight junction disassembly, and controlling the equilibrium between tolerance and immunity to non-self antigens. This is Haptoglobin (HP) from Homo sapiens (Human).